A 188-amino-acid chain; its full sequence is Acireductone dioxygenase (188 aa).

Residues His-97, His-99, Glu-103, and His-141 each contribute to the Fe(2+) site. Ni(2+) contacts are provided by His-97, His-99, Glu-103, and His-141.

It belongs to the acireductone dioxygenase (ARD) family. As to quaternary structure, monomer. Fe(2+) is required as a cofactor. The cofactor is Ni(2+).

It carries out the reaction 1,2-dihydroxy-5-(methylsulfanyl)pent-1-en-3-one + O2 = 3-(methylsulfanyl)propanoate + CO + formate + 2 H(+). It catalyses the reaction 1,2-dihydroxy-5-(methylsulfanyl)pent-1-en-3-one + O2 = 4-methylsulfanyl-2-oxobutanoate + formate + 2 H(+). It participates in amino-acid biosynthesis; L-methionine biosynthesis via salvage pathway; L-methionine from S-methyl-5-thio-alpha-D-ribose 1-phosphate: step 5/6. Functionally, catalyzes 2 different reactions between oxygen and the acireductone 1,2-dihydroxy-3-keto-5-methylthiopentene (DHK-MTPene) depending upon the metal bound in the active site. Fe-containing acireductone dioxygenase (Fe-ARD) produces formate and 2-keto-4-methylthiobutyrate (KMTB), the alpha-ketoacid precursor of methionine in the methionine recycle pathway. Ni-containing acireductone dioxygenase (Ni-ARD) produces methylthiopropionate, carbon monoxide and formate, and does not lie on the methionine recycle pathway. This chain is Acireductone dioxygenase, found in Xylella fastidiosa (strain M23).